We begin with the raw amino-acid sequence, 186 residues long: Probable chorismate pyruvate-lyase (186 aa).

Arg80, Leu118, and Glu170 together coordinate substrate.

It belongs to the UbiC family.

Its subcellular location is the cytoplasm. The catalysed reaction is chorismate = 4-hydroxybenzoate + pyruvate. It functions in the pathway cofactor biosynthesis; ubiquinone biosynthesis. Functionally, removes the pyruvyl group from chorismate, with concomitant aromatization of the ring, to provide 4-hydroxybenzoate (4HB) for the ubiquinone pathway. This Pseudomonas syringae pv. tomato (strain ATCC BAA-871 / DC3000) protein is Probable chorismate pyruvate-lyase.